Reading from the N-terminus, the 178-residue chain is TM2 domain-containing protein biscotti (178 aa).

Residues 1-18 form the signal peptide; that stretch reads MFPVLLLLLFFFAKETHQ. Topologically, residues 19 to 99 are extracellular; the sequence is INVDCNELQM…YHLDTTLLLS (81 aa). 2 N-linked (GlcNAc...) asparagine glycosylation sites follow: Asn-69 and Asn-75. The TM2 domain maps to 94–137; that stretch reads TTLLLSVFLGMFGVDRFYLGYPGIGLLKFCTLGGMFLGQLIDIV. A helical membrane pass occupies residues 100 to 120; sequence VFLGMFGVDRFYLGYPGIGLL. Residues 121-124 are Cytoplasmic-facing; the sequence is KFCT. Residues 125-145 form a helical membrane-spanning segment; the sequence is LGGMFLGQLIDIVLIALQVVG. Topologically, residues 146–178 are extracellular; that stretch reads PADGSAYVIPYYGAGIHIVRSDNTTYRLPRDDW. N-linked (GlcNAc...) asparagine glycosylation is present at Asn-168.

It belongs to the TM2 family.

It localises to the membrane. Functionally, positive regulator of Notch signaling. Maternal neurogenic factor involved in Notch signaling-dependent neuroectodermal specification during early embryogenesis. Functions cooperatively with amx/TM2D3 and amrt/TM2D2. The protein is TM2 domain-containing protein biscotti of Drosophila melanogaster (Fruit fly).